The following is a 459-amino-acid chain: Glutamate--tRNA ligase 2 (459 aa).

The 'HIGH' region signature appears at 8 to 18; the sequence is PSPTGYLHIGG. A 'KMSKS' region motif is present at residues 237–241; sequence KLSKR. Position 240 (K240) interacts with ATP.

It belongs to the class-I aminoacyl-tRNA synthetase family. Glutamate--tRNA ligase type 1 subfamily. As to quaternary structure, monomer.

Its subcellular location is the cytoplasm. The catalysed reaction is tRNA(Glu) + L-glutamate + ATP = L-glutamyl-tRNA(Glu) + AMP + diphosphate. Catalyzes the attachment of glutamate to tRNA(Glu) in a two-step reaction: glutamate is first activated by ATP to form Glu-AMP and then transferred to the acceptor end of tRNA(Glu). This Campylobacter curvus (strain 525.92) protein is Glutamate--tRNA ligase 2.